Reading from the N-terminus, the 216-residue chain is tRNA (guanine-N(7)-)-methyltransferase (216 aa).

Residues E43, D68, N95, and N117 each contribute to the S-adenosyl-L-methionine site. Residues D153 and 190–193 (TEYE) contribute to the substrate site.

Belongs to the class I-like SAM-binding methyltransferase superfamily. TrmB family.

It carries out the reaction guanosine(46) in tRNA + S-adenosyl-L-methionine = N(7)-methylguanosine(46) in tRNA + S-adenosyl-L-homocysteine. The protein operates within tRNA modification; N(7)-methylguanine-tRNA biosynthesis. Its function is as follows. Catalyzes the formation of N(7)-methylguanine at position 46 (m7G46) in tRNA. This is tRNA (guanine-N(7)-)-methyltransferase from Desulfitobacterium hafniense (strain Y51).